The primary structure comprises 388 residues: Lamin tail domain-containing protein 1 (388 aa).

The LTD domain maps to 136–254 (EVGQFTSSSL…QAIAWYTPIH (119 aa)). Residues 349–388 (EPHNTSTAGGRLDRQPRTRSTRPNRASGSKKKKTSESQKQ) form a disordered region. Positions 365-381 (RTRSTRPNRASGSKKKK) are enriched in basic residues.

Belongs to the intermediate filament family.

The chain is Lamin tail domain-containing protein 1 (LMNTD1) from Homo sapiens (Human).